The sequence spans 303 residues: Probable 5-dehydro-4-deoxyglucarate dehydratase (303 aa).

It belongs to the DapA family.

The enzyme catalyses 5-dehydro-4-deoxy-D-glucarate + H(+) = 2,5-dioxopentanoate + CO2 + H2O. It functions in the pathway carbohydrate acid metabolism; D-glucarate degradation; 2,5-dioxopentanoate from D-glucarate: step 2/2. The polypeptide is Probable 5-dehydro-4-deoxyglucarate dehydratase (Pseudomonas syringae pv. tomato (strain ATCC BAA-871 / DC3000)).